A 243-amino-acid chain; its full sequence is 3-deoxy-manno-octulosonate cytidylyltransferase (243 aa).

Belongs to the KdsB family.

Its subcellular location is the cytoplasm. The catalysed reaction is 3-deoxy-alpha-D-manno-oct-2-ulosonate + CTP = CMP-3-deoxy-beta-D-manno-octulosonate + diphosphate. The protein operates within nucleotide-sugar biosynthesis; CMP-3-deoxy-D-manno-octulosonate biosynthesis; CMP-3-deoxy-D-manno-octulosonate from 3-deoxy-D-manno-octulosonate and CTP: step 1/1. Its pathway is bacterial outer membrane biogenesis; lipopolysaccharide biosynthesis. Its function is as follows. Activates KDO (a required 8-carbon sugar) for incorporation into bacterial lipopolysaccharide in Gram-negative bacteria. The protein is 3-deoxy-manno-octulosonate cytidylyltransferase of Bartonella tribocorum (strain CIP 105476 / IBS 506).